The sequence spans 4691 residues: Plectin (4691 aa).

The segment at 1 to 1478 (MVAGMLMPLD…SELTTLTSQY (1478 aa)) is globular 1. R21 is modified (phosphoserine). At V26 the chain carries Phosphotyrosine. 2 disordered regions span residues 113-161 (RSPH…TPVV) and 167-186 (GTLA…RDRV). Over residues 137-154 (DPAREERQVYRRKEREEG) the composition is skewed to basic and acidic residues. The interval 181–411 (DERDRVQKKT…YVSSLYDAMP (231 aa)) is actin-binding. Calponin-homology (CH) domains are found at residues 185–293 (RVQK…LHFQ) and 306–411 (MTAK…DAMP). The Spectrin 1 repeat unit spans residues 653–727 (LQSTQRRPEL…ERARNDESQL (75 aa)). Phosphoserine is present on S728. Spectrin repeat units lie at residues 748 to 832 (KLLN…REDH) and 845 to 938 (LQTQ…AIVQ). T823 carries the post-translational modification Phosphothreonine. One can recognise an SH3 domain in the interval 949–1006 (RGHVPLIAVCDYKQVEVTVHKGDQCQLVGPAQPSHWKVLSGSSSEAAVPSVCFLVPPP). A required for interaction with intermediate filament proteins region spans residues 963–4572 (VEVTVHKGDQ…ARTAQKLRDV (3610 aa)). S1055 carries the phosphoserine modification. The stretch at 1323 to 1423 (RERVTQLLER…QKFAKQYINA (101 aa)) is one Spectrin 4 repeat. S1443 carries the post-translational modification Phosphoserine. Coiled-coil stretches lie at residues 1477 to 1697 (QYIK…ERRL) and 1729 to 2764 (SFAE…TTQA). The segment at 1479–2762 (IKFISETLRR…ALAHSEIATT (1284 aa)) is central fibrous rod domain. Positions 1626-1653 (RAEEAEAQKRQAQEEAERLRRQVQDESQ) are disordered. S1729 carries the phosphoserine modification. K1733 bears the N6-acetyllysine mark. 3 disordered regions span residues 1801–1835 (SLAQ…RELA), 2100–2141 (AEDT…SLAA), and 2223–2317 (RLRS…KHKK). 4 stretches are compositionally biased toward basic and acidic residues: residues 1806 to 1835 (DAEK…RELA), 2100 to 2116 (AEDT…EAAR), 2124 to 2136 (EEQR…ERVQ), and 2223 to 2266 (RLRS…KQSA). The span at 2267-2280 (EEQAQAQAQAQAAA) shows a compositional bias: low complexity. The segment covering 2281-2296 (EKLRKEAEQEAARRAQ) has biased composition (basic and acidic residues). S2639 is subject to Phosphoserine. K2644 bears the N6-acetyllysine mark. Residues 2675–2728 (LREEQQRQQQQMEQEKQELMASMEEARRRQREAEEGVRRKQEELQHLEQQRQQQ) are disordered. Over residues 2687-2728 (EQEKQELMASMEEARRRQREAEEGVRRKQEELQHLEQQRQQQ) the composition is skewed to basic and acidic residues. Residues 2763-4691 (QAASTKALPN…SLGGPESAVA (1929 aa)) are globular 2. Phosphoserine is present on S2781. Y2788 carries the phosphotyrosine modification. Plectin repeat units lie at residues 2795-2832 (QKVP…REDV), 2833-2870 (YRYL…PGTA), 2871-2908 (LILL…PELH), 2909-2946 (HKLL…RDHG), 2947-2984 (VRLL…EEMN), and 2988-3022 (SDPS…PETG). Residue S2809 is modified to Phosphoserine. T2893 carries the post-translational modification Phosphothreonine. Residue Y3040 is modified to Phosphotyrosine. 2 positions are modified to N6-acetyllysine: K3060 and K3098. 6 Plectin repeats span residues 3123–3160 (ALVP…ADSV), 3161–3198 (RQAL…PEVA), 3199–3236 (VALL…PELH), 3237–3274 (EKLL…REQG), 3275–3312 (LRLL…KETN), and 3315–3350 (LTSP…QLTG). A compositionally biased stretch (basic and acidic residues) spans 3312–3326 (NRALTSPRDDARVYH). Residues 3312 to 3338 (NRALTSPRDDARVYHDPSTQEPVTYSQ) form a disordered region. Positions 3328–3338 (PSTQEPVTYSQ) are enriched in polar residues. The residue at position 3369 (Y3369) is a Phosphotyrosine. N6-acetyllysine is present on K3427. 5 Plectin repeats span residues 3492–3529 (RTLL…PSTA), 3530–3567 (TLLL…PELH), 3568–3605 (EKLL…RDHA), 3606–3643 (IRLL…EEMN), and 3647–3681 (ADPS…PETG). Position 3792 is a phosphothreonine (T3792). At Y3797 the chain carries Phosphotyrosine. Plectin repeat units lie at residues 3827–3864 (WRYL…AEVA), 3865–3902 (RLLL…PELH), 3903–3940 (DRLL…AEEA), 3941–3978 (LRLL…KDTH), and 3982–4015 (SEPS…DPSG). Residues 3954–4291 (VDPRLGFHLP…KRRVVIVDPE (338 aa)) are required for interaction with type2 keratins, DES and VIM. T4037 carries the phosphothreonine modification. Position 4061 is a phosphoserine (S4061). Plectin repeat units lie at residues 4070 to 4107 (QKFL…PGTA), 4108 to 4145 (FELL…PEFK), 4146 to 4183 (DKLL…KDHG), 4184 to 4221 (IRLL…EEMN), 4225 to 4259 (TDPS…PQTG), and 4272 to 4312 (RKTS…HQTY). The interval 4257–4307 (QTGLCLLPLKEKKRERKTSSKSSVRKRRVVIVDPETGKEMSVYEAYRKGLI) is binding to intermediate filaments. The segment at 4387–4420 (FRSRSSSVGSSSSYPISSAGPRTQLASWSDPTEE) is disordered. S4389, S4391, S4392, S4393, S4396, S4397, S4398, and S4399 each carry phosphoserine. The segment covering 4389–4404 (SRSSSVGSSSSYPISS) has biased composition (low complexity). Position 4400 is a phosphotyrosine (Y4400). S4403 and S4413 each carry phosphoserine. The span at 4406–4416 (GPRTQLASWSD) shows a compositional bias: polar residues. 5 Plectin repeats span residues 4415-4452 (SDPT…NITG), 4453-4490 (QRLL…KIMV), 4491-4528 (DRIN…YEAG), 4529-4566 (QRFL…ARTA), and 4567-4604 (QKLR…EGTG). T4418 is modified (phosphothreonine). The interval 4503–4572 (FEDPRTKTKM…ARTAQKLRDV (70 aa)) is required for efficient interaction with KRT5 and KRT14 heterodimers. The residue at position 4546 (T4546) is a Phosphothreonine; by CDK1. 2 positions are modified to phosphoserine: S4614 and S4620. A compositionally biased stretch (low complexity) spans 4618-4678 (YYSPYSVSGS…SGYGRRYASG (61 aa)). Residues 4618 to 4691 (YYSPYSVSGS…SLGGPESAVA (74 aa)) form a disordered region. Y4622 is subject to Phosphotyrosine. Phosphoserine occurs at positions 4623, 4625, and 4629. The residue at position 4630 (T4630) is a Phosphothreonine. A 4 X 4 AA tandem repeats of G-S-R-X region spans residues 4632–4647 (GSRTGSRTGSRAGSRR). S4633 is subject to Phosphoserine. 2 positions are modified to omega-N-methylarginine: R4634 and R4647. Phosphoserine occurs at positions 4649 and 4682.

The protein belongs to the plakin or cytolinker family. In terms of assembly, homodimer or homotetramer. Interacts (via actin-binding domain) with SYNE3. Interacts (via calponin-homology (CH) 1 domain) with VIM (via rod region). Interacts (via N-terminus) with DST isoform 2 (via N-terminus). Interacts with FER. Interacts with TOR1A. Interacts with ANK3. Identified in complexes that contain VIM, EZR, AHNAK, BFSP1, BFSP2, ANK2, PLEC, PRX and spectrin. As to quaternary structure, interacts with KRT14, heterodimers consisting of KRT8 and KRT18, heterodimers consisting of KRT5 and KRT14, heterodimers consisting of KRT14 and KRT15, and heterodimers consisting of KRT1 and KRT10. Interacts with DES and VIM. Phosphorylated by CDK1; regulates dissociation from intermediate filaments during mitosis. Isoform PLEC-1A is phosphorylated on Ser-21. Isoform PLEC-1A is phosphorylated on Tyr-26. In terms of tissue distribution, detected in eye lens fiber cells (at protein level). Expressed at high levels in lung, brain, small intestine, muscle, heart and skin with lower levels found in kidney, liver, uterus, spleen and salivary gland.

It localises to the cytoplasm. The protein localises to the cytoskeleton. It is found in the cell junction. The protein resides in the hemidesmosome. Its subcellular location is the cell projection. It localises to the podosome. Interlinks intermediate filaments with microtubules and microfilaments and anchors intermediate filaments to desmosomes or hemidesmosomes. May be involved not only in the cross-linking and stabilization of cytoskeletal intermediate filaments network, but also in the regulation of their dynamics. This chain is Plectin (Plec), found in Mus musculus (Mouse).